The chain runs to 386 residues: Homoserine O-succinyltransferase (386 aa).

The 310-residue stretch at 49 to 358 (NAILICHALS…DAEQGHDSFL (310 aa)) folds into the AB hydrolase-1 domain. S156 functions as the Nucleophile in the catalytic mechanism. R226 serves as a coordination point for substrate. Catalysis depends on residues D321 and H354. D355 contacts substrate.

The protein belongs to the AB hydrolase superfamily. MetX family. Homodimer.

Its subcellular location is the cytoplasm. The catalysed reaction is L-homoserine + succinyl-CoA = O-succinyl-L-homoserine + CoA. The protein operates within amino-acid biosynthesis; L-methionine biosynthesis via de novo pathway; O-succinyl-L-homoserine from L-homoserine: step 1/1. In terms of biological role, transfers a succinyl group from succinyl-CoA to L-homoserine, forming succinyl-L-homoserine. In Acinetobacter baumannii (strain SDF), this protein is Homoserine O-succinyltransferase.